We begin with the raw amino-acid sequence, 297 residues long: Probable tyrosine phosphatase protein J2 (297 aa).

In terms of domain architecture, Tyrosine-protein phosphatase spans 21–286; it reads DSLSCIIQEY…VFCYHLIHAY (266 aa). C227 acts as the Phosphocysteine intermediate in catalysis.

This sequence belongs to the protein-tyrosine phosphatase family.

It carries out the reaction O-phospho-L-tyrosyl-[protein] + H2O = L-tyrosyl-[protein] + phosphate. This chain is Probable tyrosine phosphatase protein J2 (J3), found in Microplitis demolitor (Parasitoid wasp).